The following is a 364-amino-acid chain: Aminomethyltransferase (364 aa).

The protein belongs to the GcvT family. The glycine cleavage system is composed of four proteins: P, T, L and H.

The catalysed reaction is N(6)-[(R)-S(8)-aminomethyldihydrolipoyl]-L-lysyl-[protein] + (6S)-5,6,7,8-tetrahydrofolate = N(6)-[(R)-dihydrolipoyl]-L-lysyl-[protein] + (6R)-5,10-methylene-5,6,7,8-tetrahydrofolate + NH4(+). Its function is as follows. The glycine cleavage system catalyzes the degradation of glycine. In Proteus mirabilis (strain HI4320), this protein is Aminomethyltransferase.